Here is a 1281-residue protein sequence, read N- to C-terminus: Zinc finger transcription factor Trps1 (1281 aa).

Disordered stretches follow at residues methionine 1–proline 101 and proline 116–leucine 204. 2 stretches are compositionally biased toward polar residues: residues leucine 21–serine 31 and aspartate 40–serine 49. Residue lysine 29 forms a Glycyl lysine isopeptide (Lys-Gly) (interchain with G-Cter in SUMO2) linkage. A phosphoserine mark is found at serine 90 and serine 127. The span at leucine 148–glutamate 162 shows a compositional bias: basic and acidic residues. Residues proline 166 to valine 189 show a composition bias toward polar residues. Residues serine 178 and serine 216 each carry the phosphoserine modification. The C2H2-type 1; atypical zinc finger occupies phenylalanine 222 to histidine 247. Lysine 263 participates in a covalent cross-link: Glycyl lysine isopeptide (Lys-Gly) (interchain with G-Cter in SUMO2). The C2H2-type 2; atypical zinc finger occupies phenylalanine 333–histidine 358. The tract at residues serine 365–aspartate 393 is disordered. Glycyl lysine isopeptide (Lys-Gly) (interchain with G-Cter in SUMO2) cross-links involve residues lysine 418, lysine 457, lysine 474, and lysine 488. A disordered region spans residues asparagine 484 to alanine 515. Positions lysine 488–alanine 515 are enriched in basic and acidic residues. The C2H2-type 3; atypical zinc-finger motif lies at histidine 614–histidine 637. The interval threonine 635–serine 819 is mediates interaction with GLI3. Lysine 645 is covalently cross-linked (Glycyl lysine isopeptide (Lys-Gly) (interchain with G-Cter in SUMO2)). 2 C2H2-type zinc fingers span residues histidine 666 to histidine 689 and tyrosine 692 to histidine 715. Glycyl lysine isopeptide (Lys-Gly) (interchain with G-Cter in SUMO2) cross-links involve residues lysine 737 and lysine 755. Residue lysine 766 forms a Glycyl lysine isopeptide (Lys-Gly) (interchain with G-Cter in SUMO1); alternate linkage. Lysine 766 is covalently cross-linked (Glycyl lysine isopeptide (Lys-Gly) (interchain with G-Cter in SUMO2); alternate). Residues lysine 825 and lysine 850 each participate in a glycyl lysine isopeptide (Lys-Gly) (interchain with G-Cter in SUMO2) cross-link. The segment at alanine 856–leucine 885 is disordered. The segment covering lysine 862–proline 871 has biased composition (polar residues). Glycyl lysine isopeptide (Lys-Gly) (interchain with G-Cter in SUMO2) cross-links involve residues lysine 877 and lysine 879. The GATA-type zinc-finger motif lies at cysteine 896 to cysteine 920. Glycyl lysine isopeptide (Lys-Gly) (interchain with G-Cter in SUMO2) cross-links involve residues lysine 925, lysine 937, and lysine 965. Residues glutamate 961–glycine 977 show a composition bias toward polar residues. The segment at glutamate 961–serine 1000 is disordered. The residue at position 978 (serine 978) is a Phosphoserine. Over residues leucine 980 to glutamate 995 the composition is skewed to basic and acidic residues. Positions glutamate 985–lysine 1184 are mediates interaction with RNF4. Residues lysine 1003, lysine 1012, lysine 1030, and lysine 1040 each participate in a glycyl lysine isopeptide (Lys-Gly) (interchain with G-Cter in SUMO2) cross-link. Positions lysine 1040–proline 1049 are enriched in polar residues. The disordered stretch occupies residues lysine 1040–proline 1078. Serine 1041 bears the Phosphoserine mark. Low complexity predominate over residues glycine 1050–lysine 1059. Over residues glycine 1060–methionine 1072 the composition is skewed to basic and acidic residues. The residue at position 1066 (serine 1066) is a Phosphoserine. Residue lysine 1070 forms a Glycyl lysine isopeptide (Lys-Gly) (interchain with G-Cter in SUMO2) linkage. Serine 1085 carries the post-translational modification Phosphoserine. The segment at proline 1163–glutamate 1281 is transcriptional repressor domain. The interval lysine 1169–aspartate 1195 is disordered. Glycyl lysine isopeptide (Lys-Gly) (interchain with G-Cter in SUMO2); alternate cross-links involve residues lysine 1192 and lysine 1201. Glycyl lysine isopeptide (Lys-Gly) (interchain with G-Cter in SUMO); alternate cross-links involve residues lysine 1192 and lysine 1201. A Glycyl lysine isopeptide (Lys-Gly) (interchain with G-Cter in SUMO1); alternate cross-link involves residue lysine 1201. C2H2-type zinc fingers lie at residues threonine 1215 to histidine 1237 and phenylalanine 1243 to histidine 1267.

Interacts with RNF4; regulates TRPS1 repressor activity. Interacts specifically with the activator form of GLI3 (GLI3A) but not with the repressor form (GLI3R). In terms of processing, sumoylated. Sumoylation in the repressor domain inhibits the transcription repression activity. Sumoylation on Lys-1201 is the major site. Appears to be sumoylated on multiple sites. In terms of tissue distribution, in the embryo, expression is detected in both visceral and skeletal tissues. Found in the maxilla, mandible, snout, prospective phalanges and in the femoral head within the developing hip. Also expressed in the hair follicles.

It is found in the nucleus. Transcriptional repressor. Binds specifically to GATA sequences and represses expression of GATA-regulated genes at selected sites and stages in vertebrate development. Regulates chondrocyte proliferation and differentiation. Executes multiple functions in proliferating chondrocytes, expanding the region of distal chondrocytes, activating proliferation in columnar cells and supporting the differentiation of columnar into hypertrophic chondrocytes. This Mus musculus (Mouse) protein is Zinc finger transcription factor Trps1 (Trps1).